The primary structure comprises 368 residues: Alanine racemase (368 aa).

Residue Lys40 is the Proton acceptor; specific for D-alanine of the active site. Lys40 carries the N6-(pyridoxal phosphate)lysine modification. A substrate-binding site is contributed by Arg134. Tyr263 functions as the Proton acceptor; specific for L-alanine in the catalytic mechanism. Met310 is a substrate binding site.

This sequence belongs to the alanine racemase family. Requires pyridoxal 5'-phosphate as cofactor.

The catalysed reaction is L-alanine = D-alanine. It participates in amino-acid biosynthesis; D-alanine biosynthesis; D-alanine from L-alanine: step 1/1. In terms of biological role, catalyzes the interconversion of L-alanine and D-alanine. May also act on other amino acids. The chain is Alanine racemase (alr) from Listeria monocytogenes serovar 1/2a (strain ATCC BAA-679 / EGD-e).